The sequence spans 551 residues: Membrane protein insertase YidC (551 aa).

The helical transmembrane segment at 6–26 (YFLWGALFISGYLLFLQWSQD) threads the bilayer. Low complexity predominate over residues 34–50 (SVAQSTQSQSETNSQMS). Residues 34–68 (SVAQSTQSQSETNSQMSDDLPMATQSTTEANAEIP) form a disordered region. Residues 56-68 (ATQSTTEANAEIP) show a composition bias toward polar residues. Transmembrane regions (helical) follow at residues 340-360 (TVDY…LTLI), 363-383 (FVIN…AIFF), 433-453 (LGGC…YWVL), 464-484 (FFLW…PILM), and 509-529 (IMPV…VLYW).

Belongs to the OXA1/ALB3/YidC family. Type 1 subfamily. In terms of assembly, interacts with the Sec translocase complex via SecD. Specifically interacts with transmembrane segments of nascent integral membrane proteins during membrane integration.

It is found in the cell inner membrane. In terms of biological role, required for the insertion and/or proper folding and/or complex formation of integral membrane proteins into the membrane. Involved in integration of membrane proteins that insert both dependently and independently of the Sec translocase complex, as well as at least some lipoproteins. Aids folding of multispanning membrane proteins. The protein is Membrane protein insertase YidC of Marinomonas sp. (strain MWYL1).